The sequence spans 275 residues: MPGLRAALPAALLLLSSFPPAAAERLPWPQVPGVMRPLNPSHREAVWAAWTALHYINSHEASPSRPLALHKVVKAASKMIPRLGWKYYVHCTTEGYIHGENAGSCFATVLYLKKSPPVVHGKCVHAQNKKQIQEEDHRFYEYLQHQKKPITANYIPDSNGNIAHDHLQLWGLAIVGSSYIMWKQSTEHTGYLLAQVSSVKQQIRKDNAVAFKFIVLLHEIPTQQLNVCHMYLVWTLGHPIRVKYSCAPDNHGLEDGSGQDSGSAAGTSHETKGNF.

Residues 1–23 form the signal peptide; that stretch reads MPGLRAALPAALLLLSSFPPAAA. Cystatin LXN-type domains lie at 32 to 131 and 151 to 255; these read PGVM…NKKQ and TANY…GLED. Residues 254 to 275 form a disordered region; it reads EDGSGQDSGSAAGTSHETKGNF. The segment covering 256 to 268 has biased composition (low complexity); that stretch reads GSGQDSGSAAGTS.

It belongs to the protease inhibitor I47 (latexin) family. In terms of tissue distribution, expressed at high levels in the uterine and isthmus regions of the oviduct, and concentrated in the eggshell.

It is found in the secreted. Functionally, component of the matrix of the eggshell. This is Ovocalyxin-32 from Gallus gallus (Chicken).